The chain runs to 1288 residues: Outer capsid protein lambda-2 (1288 aa).

Position 892–899 (892–899 (GAAAAGKS)) interacts with ATP.

Belongs to the orthoreovirus lambda-2 protein family. As to quaternary structure, interacts with protein mu-NS; in viral inclusions.

It localises to the virion. It carries out the reaction a 5'-end diphospho-ribonucleoside in mRNA + GTP + H(+) = a 5'-end (5'-triphosphoguanosine)-ribonucleoside in mRNA + diphosphate. It catalyses the reaction a 5'-end (5'-triphosphoguanosine)-ribonucleoside in mRNA + S-adenosyl-L-methionine = a 5'-end (N(7)-methyl 5'-triphosphoguanosine)-ribonucleoside in mRNA + S-adenosyl-L-homocysteine. Its function is as follows. Outer capsid protein involved in mRNA capping. Catalyzes the last 3 enzymatic activities for formation of the 5' cap structure on the viral plus-strand transcripts, namely the RNA guanylyltransferase, RNA-7N- and RNA-2'O-methyltransferase activities. The polypeptide is Outer capsid protein lambda-2 (L2) (Reovirus type 2 (strain D5/Jones) (T2J)).